Reading from the N-terminus, the 509-residue chain is Maturase K (509 aa).

The protein belongs to the intron maturase 2 family. MatK subfamily.

It is found in the plastid. The protein resides in the chloroplast. Usually encoded in the trnK tRNA gene intron. Probably assists in splicing its own and other chloroplast group II introns. The chain is Maturase K from Anthocercis angustifolia (Narrow-leaf ray-flower).